Reading from the N-terminus, the 175-residue chain is Epididymal-specific lipocalin-8 (175 aa).

An N-terminal signal peptide occupies residues 1-22; the sequence is MEARLLSNVCGFFLVFLLQAES. Asn66 and Asn74 each carry an N-linked (GlcNAc...) asparagine glycan. Cysteines 79 and 166 form a disulfide.

Belongs to the calycin superfamily. Lipocalin family. Predominantly expressed in epididymis.

The protein resides in the secreted. May play a role in male fertility. May act as a retinoid carrier protein within the epididymis. This chain is Epididymal-specific lipocalin-8 (Lcn8), found in Mus musculus (Mouse).